Reading from the N-terminus, the 250-residue chain is uncharacterized protein (250 aa).

An N-terminal signal peptide occupies residues methionine 1 to alanine 17. 4 N-linked (GlcNAc...) asparagine glycosylation sites follow: asparagine 48, asparagine 159, asparagine 223, and asparagine 239.

The protein localises to the secreted. This is an uncharacterized protein from Caenorhabditis elegans.